A 315-amino-acid chain; its full sequence is Coproporphyrin III ferrochelatase (315 aa).

Residues tyrosine 13, arginine 30, 46 to 47, serine 54, and tyrosine 125 contribute to the Fe-coproporphyrin III site; that span reads RY. Residues histidine 183 and glutamate 264 each coordinate Fe(2+).

Belongs to the ferrochelatase family.

Its subcellular location is the cytoplasm. It catalyses the reaction Fe-coproporphyrin III + 2 H(+) = coproporphyrin III + Fe(2+). The protein operates within porphyrin-containing compound metabolism; protoheme biosynthesis. Its function is as follows. Involved in coproporphyrin-dependent heme b biosynthesis. Catalyzes the insertion of ferrous iron into coproporphyrin III to form Fe-coproporphyrin III. The polypeptide is Coproporphyrin III ferrochelatase (Anoxybacillus flavithermus (strain DSM 21510 / WK1)).